Consider the following 354-residue polypeptide: MGCTLSAEDKAAVERSKMIDRNLREDGEKAAREVKLLLLGAGESGKSTIVKQMKIIHEAGYSEEECKQYKAVVYSNTIQSIIAIIRAMGRLKIDFGDSARADDARQLFVLAGAAEEGFMTAELAGVIKRLWKDSGVQACFNRSREYQLNDSAAYYLNDLDRIAQPNYIPTQQDVLRTRVKTTGIVETHFTFKDLHFKMFDVGGQRSERKKWIHCFEGVTAIIFCVALSDYDLVLAEDEEMNRMHESMKLFDSTCNNKWFTDTSIILFLNKKDLFEEKIKKSPLTICYPEYAGSNTYEEAAAYIQCQFEDLNKRKDTKEIYTHFTCATDTKNVQFVFDAVTDVIIKNNLKDCGLF.

A lipid anchor (N-myristoyl glycine) is attached at Gly-2. Residue Cys-3 is the site of S-palmitoyl cysteine attachment. The G-alpha domain maps to 32 to 354 (REVKLLLLGA…KNNLKDCGLF (323 aa)). Residues 35–48 (KLLLLGAGESGKST) form a G1 motif region. GTP-binding positions include 43–48 (ESGKST), 150–151 (DS), and 175–178 (LRTR). A Mg(2+)-binding site is contributed by Ser-47. Residues 173-181 (DVLRTRVKT) form a G2 motif region. Thr-181 contributes to the Mg(2+) binding site. The segment at 196–205 (FKMFDVGGQR) is G3 motif. GTP-binding positions include 200 to 204 (DVGGQ), 269 to 272 (NKKD), and Ala-326. The G4 motif stretch occupies residues 265 to 272 (ILFLNKKD). The tract at residues 324 to 329 (TCATDT) is G5 motif.

It belongs to the G-alpha family. G(i/o/t/z) subfamily. As to quaternary structure, heterotrimeric G proteins are composed of 3 units; alpha, beta and gamma. The alpha chain contains the guanine nucleotide binding site. Part of a spindle orientation complex at least composed of GNAI1, GPSM2 and NUMA1. Identified in complex with the beta subunit GNB1 and the gamma subunit GNG1. Identified in complex with the beta subunit GNB1 and the gamma subunit GNG2. Component of the TAS2R14-GNAI1 complex, consisting of TAS2R14, GNAI1, GNB1 and GNG2; within the complex interacts with TAS2R14; this complex plays a role in the perception of bitterness. GTP binding causes dissociation of the heterotrimer, liberating the individual subunits so that they can interact with downstream effector proteins. Interacts (GDP-bound form) with GPSM1; this inhibits guanine nucleotide exchange and GTP binding. Interacts (GDP-bound form) with GPSM2 (via GoLoco domains); this inhibits guanine nucleotide exchange. Interacts with RGS10; this strongly enhances GTP hydrolysis. Interacts with RGS1 and RGS16; this strongly enhances GTPase activity. Interacts with RGS4. Interacts with RGS12. Interacts (via active GTP- or inactive GDP-bound forms) with RGS14 (via RGS and GoLoco domains). Interacts with RGS3, RGS6, RGS7, RGS8, RGS17, RGS18 and RGS20 (in vitro). Interacts (GDP-bound form) with RIC8A (via C-terminus); promoting GNAI1 folding and association with the plasma membrane. Interacts (inactive GDP-bound form) with NUCB1 (via GBA motif); the interaction leads to activation of GNAI1. Interacts (inactive GDP-bound form) with CCDC88C/DAPLE (via GBA motif); the interaction leads to activation of GNAI1. Interacts (inactive GDP-bound form) with CCDC8A/GIV (via GBA motif). Interacts with GPR15. Myristoylation at Gly-2 is required for membrane anchoring before palmitoylation. In terms of processing, palmitoylation at Cys-3 varies with membrane lipid composition.

Its subcellular location is the nucleus. It is found in the cytoplasm. The protein resides in the cell membrane. It localises to the cytoskeleton. The protein localises to the microtubule organizing center. Its subcellular location is the centrosome. It is found in the cell cortex. The protein resides in the membrane. Functionally, guanine nucleotide-binding proteins (G proteins) function as transducers downstream of G protein-coupled receptors (GPCRs) in numerous signaling cascades. The alpha chain contains the guanine nucleotide binding site and alternates between an active, GTP-bound state and an inactive, GDP-bound state. Signaling by an activated GPCR promotes GDP release and GTP binding. The alpha subunit has a low GTPase activity that converts bound GTP to GDP, thereby terminating the signal. Both GDP release and GTP hydrolysis are modulated by numerous regulatory proteins. Signaling is mediated via effector proteins, such as adenylate cyclase. Inhibits adenylate cyclase activity of ADCY1, ADCY5 and ADCY6, leading to decreased intracellular cAMP levels. The inactive GDP-bound form prevents the association of RGS14 with centrosomes and is required for the translocation of RGS14 from the cytoplasm to the plasma membrane. Required for normal cytokinesis during mitosis. Required for cortical dynein-dynactin complex recruitment during metaphase. The polypeptide is Guanine nucleotide-binding protein G(i) subunit alpha-1 (GNAI1) (Pongo abelii (Sumatran orangutan)).